The sequence spans 561 residues: Putative transport protein CKO_02260 (561 aa).

5 consecutive transmembrane segments (helical) span residues 8–28 (LLNGNYILLLFVVLALGLCLG), 32–52 (LGSVQLGNSIGVLVVSLLLGQ), 66–86 (FMLFIFCVGVEAGPNFFSIFF), 94–114 (MLALVMVGSALLIALGLGKLF), and 158–178 (NLSLGYALTYLIGLVSLIVGA). RCK C-terminal domains follow at residues 200-288 (RGLD…SFRN) and 292-373 (VFDR…RIGF). 5 helical membrane passes run 383-403 (LLAFCAFFIIGLMIGMITFQF), 406-426 (FSFGIGNAAGLLFAGIMLGFL), 447-467 (FGLMVFMAGVGLSAGSGIGNG), 475-495 (MLIAGLVVSLVPVIICFLFGA), and 540-560 (AIANVLLTLAGTLIVIIWPGL).

This sequence belongs to the AAE transporter (TC 2.A.81) family. YbjL subfamily.

It is found in the cell membrane. This Citrobacter koseri (strain ATCC BAA-895 / CDC 4225-83 / SGSC4696) protein is Putative transport protein CKO_02260.